Consider the following 395-residue polypeptide: NADH-quinone oxidoreductase subunit D (395 aa).

It belongs to the complex I 49 kDa subunit family. NDH-1 is composed of 14 different subunits. Subunits NuoB, C, D, E, F, and G constitute the peripheral sector of the complex.

It localises to the cell inner membrane. The catalysed reaction is a quinone + NADH + 5 H(+)(in) = a quinol + NAD(+) + 4 H(+)(out). In terms of biological role, NDH-1 shuttles electrons from NADH, via FMN and iron-sulfur (Fe-S) centers, to quinones in the respiratory chain. The immediate electron acceptor for the enzyme in this species is believed to be ubiquinone. Couples the redox reaction to proton translocation (for every two electrons transferred, four hydrogen ions are translocated across the cytoplasmic membrane), and thus conserves the redox energy in a proton gradient. The protein is NADH-quinone oxidoreductase subunit D of Anaplasma phagocytophilum (strain HZ).